We begin with the raw amino-acid sequence, 1157 residues long: Probable inactive leucine-rich repeat receptor kinase XIAO (1157 aa).

An N-terminal signal peptide occupies residues 1–21 (MPPPPRLLFLLVMLLVVAAPG). Residue asparagine 58 is glycosylated (N-linked (GlcNAc...) asparagine). LRR repeat units lie at residues 101-125 (LVYL…LSRI), 127-149 (SLRA…FLAN), 150-172 (LTNL…VSFP), 173-196 (PSLK…VSAS), 198-220 (TSLQ…SLGT), 221-245 (LQDL…LSNC), 247-269 (ALLH…VAAI), 270-293 (PSLQ…AFGG), 296-319 (NSSL…VSLG), 320-343 (KDLQ…LAGA), 344-367 (GGLT…VGQL), 368-391 (TALQ…IGRC), 393-414 (ALQV…ALGG), 415-439 (LRRL…LGNL), 440-463 (SWLE…LFVL), 464-487 (GNLT…IGNL), 489-511 (ALQS…IGNL), 513-536 (NLRV…LFGL), 537-559 (PQLQ…GFSS), 561-583 (WSLR…TYGY), 584-608 (LPSL…LANC), 609-631 (SNLT…DFAR), 632-656 (LGEL…ISNC), 658-680 (SLVT…LSNL), 681-704 (SKLQ…LAQI), and 706-728 (GMLS…LGSR). A glycan (N-linked (GlcNAc...) asparagine) is linked at asparagine 149. N-linked (GlcNAc...) asparagine glycans are attached at residues asparagine 192, asparagine 204, and asparagine 244. N-linked (GlcNAc...) asparagine glycosylation is present at asparagine 296. An N-linked (GlcNAc...) asparagine glycan is attached at asparagine 438. N-linked (GlcNAc...) asparagine glycans are attached at residues asparagine 465, asparagine 494, and asparagine 524. Asparagine 567, asparagine 607, asparagine 610, asparagine 655, asparagine 679, asparagine 692, and asparagine 711 each carry an N-linked (GlcNAc...) asparagine glycan. A helical transmembrane segment spans residues 765–785 (LALLIGVVAATVLLLVLFCCC). A disordered region spans residues 804 to 825 (VKKRRRSPGRGSGSSGTSTDSV). A Protein kinase domain is found at 849–1144 (FDEENVLSRG…LEGCRVGPDI (296 aa)). ATP contacts are provided by residues 855-863 (LSRGRHGLV), 930-932 (DYM), 936-939 (NLAT), 980-985 (DVKPQN), and aspartate 998.

Belongs to the protein kinase superfamily. Ser/Thr protein kinase family. As to expression, expressed in developing culm, coleoptile, primary root, young spikelet, young leaf blade and leaf sheath, floral meristem primordia, stamen primordia, and lemma and palea primordia.

The protein localises to the cell membrane. Functionally, functions in the early stages of organ development by regulating cell division rate. Is probably involved in the regulation of a number of cell-cycle genes. May act as regulator of brassinosteroid (BR) signaling and cell-cycle controlling organ growth. The protein is Probable inactive leucine-rich repeat receptor kinase XIAO of Oryza sativa subsp. japonica (Rice).